The sequence spans 345 residues: UPF0324 membrane protein HH_1161 (345 aa).

10 consecutive transmembrane segments (helical) span residues 7 to 29, 33 to 50, 90 to 112, 122 to 141, 154 to 176, 186 to 208, 215 to 237, 262 to 281, 293 to 312, and 322 to 344; these read GFLY…SATL, LSPL…SPFY, LGLN…AIFI, ISLL…ILAL, VALG…IYYA, WGIF…AISP, IIVK…YIIF, LYIP…NSFI, FASK…QIDW, and TFAL…VYIM.

It belongs to the UPF0324 family.

The protein resides in the cell membrane. The protein is UPF0324 membrane protein HH_1161 of Helicobacter hepaticus (strain ATCC 51449 / 3B1).